Consider the following 391-residue polypeptide: Formate-dependent phosphoribosylglycinamide formyltransferase (391 aa).

Residues 18–19 (EL) and glutamate 78 each bind N(1)-(5-phospho-beta-D-ribosyl)glycinamide. ATP is bound by residues arginine 110, lysine 151, 156–161 (SSGKGQ), 191–194 (EEFI), and glutamate 199. The ATP-grasp domain maps to 115-305 (ELAAQQLGVR…EFELHLRAIL (191 aa)). Mg(2+)-binding residues include glutamate 264 and glutamate 276. Residues aspartate 283, lysine 353, and 360 to 361 (RR) each bind N(1)-(5-phospho-beta-D-ribosyl)glycinamide.

The protein belongs to the PurK/PurT family. In terms of assembly, homodimer.

The catalysed reaction is N(1)-(5-phospho-beta-D-ribosyl)glycinamide + formate + ATP = N(2)-formyl-N(1)-(5-phospho-beta-D-ribosyl)glycinamide + ADP + phosphate + H(+). It functions in the pathway purine metabolism; IMP biosynthesis via de novo pathway; N(2)-formyl-N(1)-(5-phospho-D-ribosyl)glycinamide from N(1)-(5-phospho-D-ribosyl)glycinamide (formate route): step 1/1. In terms of biological role, involved in the de novo purine biosynthesis. Catalyzes the transfer of formate to 5-phospho-ribosyl-glycinamide (GAR), producing 5-phospho-ribosyl-N-formylglycinamide (FGAR). Formate is provided by PurU via hydrolysis of 10-formyl-tetrahydrofolate. The polypeptide is Formate-dependent phosphoribosylglycinamide formyltransferase (Synechocystis sp. (strain ATCC 27184 / PCC 6803 / Kazusa)).